A 505-amino-acid chain; its full sequence is ATP synthase subunit alpha (505 aa).

An ATP-binding site is contributed by 170 to 177 (GDRQTGKT).

It belongs to the ATPase alpha/beta chains family. In terms of assembly, F-type ATPases have 2 components, CF(1) - the catalytic core - and CF(0) - the membrane proton channel. CF(1) has five subunits: alpha(3), beta(3), gamma(1), delta(1), epsilon(1). CF(0) has four main subunits: a(1), b(1), b'(1) and c(9-12).

It is found in the cellular thylakoid membrane. The enzyme catalyses ATP + H2O + 4 H(+)(in) = ADP + phosphate + 5 H(+)(out). Produces ATP from ADP in the presence of a proton gradient across the membrane. The alpha chain is a regulatory subunit. The sequence is that of ATP synthase subunit alpha from Prochlorococcus marinus (strain SARG / CCMP1375 / SS120).